Consider the following 82-residue polypeptide: RNA-binding protein Hfq (82 aa).

A Sm domain is found at 11 to 71 (DTFLNHVRKT…ISTIMPGAPI (61 aa)).

The protein belongs to the Hfq family. Homohexamer.

RNA chaperone that binds small regulatory RNA (sRNAs) and mRNAs to facilitate mRNA translational regulation in response to envelope stress, environmental stress and changes in metabolite concentrations. Also binds with high specificity to tRNAs. The chain is RNA-binding protein Hfq from Rhodopseudomonas palustris (strain HaA2).